Here is a 118-residue protein sequence, read N- to C-terminus: Large ribosomal subunit protein bL19 (118 aa).

It belongs to the bacterial ribosomal protein bL19 family.

Its function is as follows. This protein is located at the 30S-50S ribosomal subunit interface and may play a role in the structure and function of the aminoacyl-tRNA binding site. In Salinispora tropica (strain ATCC BAA-916 / DSM 44818 / JCM 13857 / NBRC 105044 / CNB-440), this protein is Large ribosomal subunit protein bL19.